The primary structure comprises 53 residues: Large ribosomal subunit protein bL32 (53 aa).

The span at 1–20 shows a compositional bias: basic residues; the sequence is MAVPKRRVSHTRAAKRRTHY. The tract at residues 1 to 53 is disordered; it reads MAVPKRRVSHTRAAKRRTHYKLTLPMPVKDADGTWRMPHHMNMTTGEYKTTKA. A compositionally biased stretch (polar residues) spans 42–53; it reads NMTTGEYKTTKA.

Belongs to the bacterial ribosomal protein bL32 family.

The protein is Large ribosomal subunit protein bL32 of Sulfurovum sp. (strain NBC37-1).